Here is a 277-residue protein sequence, read N- to C-terminus: MTQQIDRYAVFGNPIEHSKSPFIHTLFARQTNQPLIYTAETAPKEGFVEAVKAFFAEGGKGCNVTLPFKEEAYQFASRLTERAQLAGAVNTLKKLDDGDIIGDNTDGAGLVQDLLQHQVVLAGARILVIGAGGAARGVLKPLLDQKPTSLTITNRTFSKAEKLAVLFAAYGSVTAKEMNTVTEEYDVIINSTSASLSGELPALSSSIFAANSTSYDMMYGKGDTTFNQWAKQHGAAHAYDGLGMLVGQAAESFMLWRGLRPGSKQILRELRKNLEGL.

Shikimate-binding positions include 18–20 and Thr65; that span reads SKS. Lys69 (proton acceptor) is an active-site residue. Residue Glu81 participates in NADP(+) binding. 2 residues coordinate shikimate: Asn90 and Asp106. NADP(+) is bound by residues 130–134, 154–159, and Met217; these read GAGGA and NRTFSK. Tyr219 provides a ligand contact to shikimate. Gly241 lines the NADP(+) pocket.

This sequence belongs to the shikimate dehydrogenase family. Homodimer.

The enzyme catalyses shikimate + NADP(+) = 3-dehydroshikimate + NADPH + H(+). The protein operates within metabolic intermediate biosynthesis; chorismate biosynthesis; chorismate from D-erythrose 4-phosphate and phosphoenolpyruvate: step 4/7. Functionally, involved in the biosynthesis of the chorismate, which leads to the biosynthesis of aromatic amino acids. Catalyzes the reversible NADPH linked reduction of 3-dehydroshikimate (DHSA) to yield shikimate (SA). The protein is Shikimate dehydrogenase (NADP(+)) of Vibrio vulnificus (strain CMCP6).